A 114-amino-acid chain; its full sequence is Ribonuclease P protein component (114 aa).

The protein belongs to the RnpA family. In terms of assembly, consists of a catalytic RNA component (M1 or rnpB) and a protein subunit.

The enzyme catalyses Endonucleolytic cleavage of RNA, removing 5'-extranucleotides from tRNA precursor.. RNaseP catalyzes the removal of the 5'-leader sequence from pre-tRNA to produce the mature 5'-terminus. It can also cleave other RNA substrates such as 4.5S RNA. The protein component plays an auxiliary but essential role in vivo by binding to the 5'-leader sequence and broadening the substrate specificity of the ribozyme. In Borrelia turicatae (strain 91E135), this protein is Ribonuclease P protein component.